Reading from the N-terminus, the 299-residue chain is Bifunctional protein FolD (299 aa).

NADP(+)-binding positions include 168–170 (GRS), Ser-193, and Ile-234.

The protein belongs to the tetrahydrofolate dehydrogenase/cyclohydrolase family. As to quaternary structure, homodimer.

It carries out the reaction (6R)-5,10-methylene-5,6,7,8-tetrahydrofolate + NADP(+) = (6R)-5,10-methenyltetrahydrofolate + NADPH. It catalyses the reaction (6R)-5,10-methenyltetrahydrofolate + H2O = (6R)-10-formyltetrahydrofolate + H(+). The protein operates within one-carbon metabolism; tetrahydrofolate interconversion. In terms of biological role, catalyzes the oxidation of 5,10-methylenetetrahydrofolate to 5,10-methenyltetrahydrofolate and then the hydrolysis of 5,10-methenyltetrahydrofolate to 10-formyltetrahydrofolate. The polypeptide is Bifunctional protein FolD (Bartonella bacilliformis (strain ATCC 35685 / KC583 / Herrer 020/F12,63)).